The chain runs to 109 residues: SLYAPSALVLTIGQGDSASAGIQRAVTLSCMPTPSGTHPDARDACAQLRQADGKFDELTATKAGTYCTKEWNPVTVTATGVWEGQRVNYSHTFGNPCMAKAAKSTVFSF.

2 disulfide bridges follow: Cys30–Cys45 and Cys67–Cys97.

The protein belongs to the protease inhibitor I16 (SSI) family. In terms of assembly, homodimer.

It is found in the secreted. The chain is Protease inhibitor SIL-V2 from Streptomyces orinoci (Streptoverticillium orinoci).